A 565-amino-acid polypeptide reads, in one-letter code: Alkaline nuclease (565 aa).

It belongs to the herpesviridae alkaline nuclease family. In terms of assembly, interacts with major DNA-binding protein; this interaction increases the nuclease processivity of the alkaline exonuclease.

The protein resides in the host nucleus. It localises to the host cytoplasm. Functionally, plays a role in processing non linear or branched viral DNA intermediates in order to promote the production of mature packaged unit-length linear progeny viral DNA molecules. Exhibits endonuclease and exonuclease activities and accepts both double-stranded and single-stranded DNA as substrate. Exonuclease digestion of DNA is in the 5'-&gt; 3' direction and the products are 5'-monophosphate nucleosides. Additionally, forms a recombinase with the major DNA-binding protein, which displays strand exchange activity. This chain is Alkaline nuclease, found in Equus caballus (Horse).